Here is a 151-residue protein sequence, read N- to C-terminus: Ribosome maturation factor RimP (151 aa).

It belongs to the RimP family.

The protein localises to the cytoplasm. Functionally, required for maturation of 30S ribosomal subunits. In Vibrio campbellii (strain ATCC BAA-1116), this protein is Ribosome maturation factor RimP.